The chain runs to 130 residues: ESAT-6 secretion system extracellular protein C (130 aa).

The protein belongs to the EsxC family.

It is found in the secreted. The polypeptide is ESAT-6 secretion system extracellular protein C (Staphylococcus aureus (strain MSSA476)).